Reading from the N-terminus, the 471-residue chain is V-type ATP synthase beta chain (471 aa).

It belongs to the ATPase alpha/beta chains family.

In terms of biological role, produces ATP from ADP in the presence of a proton gradient across the membrane. The V-type beta chain is a regulatory subunit. This Streptococcus pyogenes serotype M12 (strain MGAS2096) protein is V-type ATP synthase beta chain.